The chain runs to 372 residues: N-methyl-L-tryptophan oxidase (372 aa).

An FAD-binding site is contributed by 4–34 (DLIIIGSGSVGAAAGYYATRAGLNVLMTDAH). S-8alpha-FAD cysteine is present on Cys-308.

This sequence belongs to the MSOX/MTOX family. MTOX subfamily. In terms of assembly, monomer. It depends on FAD as a cofactor.

It catalyses the reaction N(alpha)-methyl-L-tryptophan + O2 + H2O = L-tryptophan + formaldehyde + H2O2. Catalyzes the oxidative demethylation of N-methyl-L-tryptophan. This Escherichia coli O6:H1 (strain CFT073 / ATCC 700928 / UPEC) protein is N-methyl-L-tryptophan oxidase.